We begin with the raw amino-acid sequence, 984 residues long: Putative formate dehydrogenase SAR2393 (984 aa).

In terms of domain architecture, 2Fe-2S ferredoxin-type spans 3–79 (EHLVVTLDGK…PMTVNTVNND (77 aa)). The [2Fe-2S] cluster site is built by C37, C48, C51, and C63. A 4Fe-4S His(Cys)3-ligated-type domain is found at 79 to 119 (DVKDAQKEALDRILEKHMLYCTVCDYNNGDCEIHNTMDAWG). 16 residues coordinate [4Fe-4S] cluster: H95, C99, C102, C109, C147, C150, C153, C157, C190, C193, C196, C200, C264, C267, C271, and C299. 4Fe-4S ferredoxin-type domains follow at residues 138 to 165 (PFYRYDPNQCILCGRCVEACQDIELNET) and 181 to 211 (NDVPINESSCVSCGQCATVCPCNAMMEVNME). Residues 252 to 984 (MRKERIKKTK…YVFPGNQVDK (733 aa)) are formate dehydrogenase. The 4Fe-4S Mo/W bis-MGD-type domain maps to 257 to 313 (IKKTKTVCTYCGVGCSFEVWTKDREILKVQPSHDSPANKIATCVKGKFSWGHINSDQ).

The protein in the C-terminal section; belongs to the prokaryotic molybdopterin-containing oxidoreductase family. It depends on [2Fe-2S] cluster as a cofactor. Requires [4Fe-4S] cluster as cofactor. Mo-bis(molybdopterin guanine dinucleotide) serves as cofactor.

The catalysed reaction is formate + NAD(+) = CO2 + NADH. The chain is Putative formate dehydrogenase SAR2393 from Staphylococcus aureus (strain MRSA252).